The following is a 103-amino-acid chain: Large ribosomal subunit protein bL21 (103 aa).

The protein belongs to the bacterial ribosomal protein bL21 family. As to quaternary structure, part of the 50S ribosomal subunit. Contacts protein L20.

Its function is as follows. This protein binds to 23S rRNA in the presence of protein L20. The protein is Large ribosomal subunit protein bL21 of Chromobacterium violaceum (strain ATCC 12472 / DSM 30191 / JCM 1249 / CCUG 213 / NBRC 12614 / NCIMB 9131 / NCTC 9757 / MK).